The primary structure comprises 236 residues: GCN5-related N-acetyltransferase 8 (236 aa).

Positions 96–235 constitute an N-acetyltransferase domain; the sequence is ATITSSPSPD…DALEAFDQVN (140 aa). Acetyl-CoA-binding positions include 161 to 163, 169 to 174, 200 to 202, and Tyr-207; these read IFV, RKGFGS, and NVN. The Proton donor role is filled by Tyr-207.

The protein belongs to the acetyltransferase family. GNAT subfamily. In terms of assembly, oligomer. In terms of tissue distribution, expressed throughout the plant.

Its subcellular location is the cytoplasm. The protein localises to the nucleus. It catalyses the reaction an N-terminal L-alpha-aminoacyl-[protein] + acetyl-CoA = N-terminal N(alpha)-acetyl-L-alpha-aminoacyl-[protein] + CoA + H(+). The enzyme catalyses L-lysyl-[protein] + acetyl-CoA = N(6)-acetyl-L-lysyl-[protein] + CoA + H(+). Probable protein acetyltransferase with dual specificity triggering both N-alpha-acetylation (NTA) and epsilon-lysine acetylation (KA). This chain is GCN5-related N-acetyltransferase 8, found in Arabidopsis thaliana (Mouse-ear cress).